Consider the following 306-residue polypeptide: tRNA dimethylallyltransferase (306 aa).

Residue 9–16 (GPTAIGKT) coordinates ATP. 11 to 16 (TAIGKT) provides a ligand contact to substrate. Positions 34–37 (DSMQ) are interaction with substrate tRNA.

This sequence belongs to the IPP transferase family. As to quaternary structure, monomer. It depends on Mg(2+) as a cofactor.

The enzyme catalyses adenosine(37) in tRNA + dimethylallyl diphosphate = N(6)-dimethylallyladenosine(37) in tRNA + diphosphate. Catalyzes the transfer of a dimethylallyl group onto the adenine at position 37 in tRNAs that read codons beginning with uridine, leading to the formation of N6-(dimethylallyl)adenosine (i(6)A). In Lactobacillus helveticus (strain DPC 4571), this protein is tRNA dimethylallyltransferase.